A 447-amino-acid chain; its full sequence is Probable glycine dehydrogenase (decarboxylating) subunit 1 (447 aa).

This sequence belongs to the GcvP family. N-terminal subunit subfamily. As to quaternary structure, the glycine cleavage system is composed of four proteins: P, T, L and H. In this organism, the P 'protein' is a heterodimer of two subunits.

It carries out the reaction N(6)-[(R)-lipoyl]-L-lysyl-[glycine-cleavage complex H protein] + glycine + H(+) = N(6)-[(R)-S(8)-aminomethyldihydrolipoyl]-L-lysyl-[glycine-cleavage complex H protein] + CO2. The glycine cleavage system catalyzes the degradation of glycine. The P protein binds the alpha-amino group of glycine through its pyridoxal phosphate cofactor; CO(2) is released and the remaining methylamine moiety is then transferred to the lipoamide cofactor of the H protein. This Beijerinckia indica subsp. indica (strain ATCC 9039 / DSM 1715 / NCIMB 8712) protein is Probable glycine dehydrogenase (decarboxylating) subunit 1.